A 365-amino-acid polypeptide reads, in one-letter code: Protein RecA (365 aa).

Gly73–Thr80 serves as a coordination point for ATP.

Belongs to the RecA family.

The protein resides in the cytoplasm. In terms of biological role, can catalyze the hydrolysis of ATP in the presence of single-stranded DNA, the ATP-dependent uptake of single-stranded DNA by duplex DNA, and the ATP-dependent hybridization of homologous single-stranded DNAs. It interacts with LexA causing its activation and leading to its autocatalytic cleavage. This is Protein RecA from Prochlorococcus marinus (strain MIT 9312).